The chain runs to 108 residues: MKSLLFTLAVFMLLAQLVSGNWYVKKCLNDVGICKKKCKPGEMHIKNGWATCGKQRDCCVPADRRANYPAFCVQTKTTRTSTVTAKTTLMVTTASMSSMAPTPVSPTG.

The first 20 residues, 1-20 (MKSLLFTLAVFMLLAQLVSG), serve as a signal peptide directing secretion. The in vitro binds to LPS, mediates antimicrobial activity and inhibits LPS-mediated inflammation stretch occupies residues 21 to 63 (NWYVKKCLNDVGICKKKCKPGEMHIKNGWATCGKQRDCCVPAD). 3 cysteine pairs are disulfide-bonded: Cys27/Cys58, Cys34/Cys52, and Cys38/Cys59.

The protein belongs to the beta-defensin family. In terms of assembly, homodimer or homooligomer; disulfide-linked. O-glycosylated; glycans contain alpha(2,3)-linked sialic acids.

It is found in the secreted. Highly glycosylated atypical beta-defensin involved in several aspects of sperm function. Facilitates sperm transport in the female reproductive tract and contributes to sperm protection against immunodetection; both functions are probably implicating the negative surface charge provided by its O-linked oligosaccharides in the sperm glycocalyx. Involved in binding of sperm to oviductal epithelial cells to form a sperm reservoir until ovulation. Release from the sperm surface during capacitation and ovaluation by an elevation of oviductal fluid pH is unmasking other surface components and allows sperm to penetrate the cumulus matrix and bind to the zona pellucida of the oocyte. In vitro has antimicrobial activity and may inhibit LPS-mediated inflammation. This chain is Beta-defensin 126 (DEFB126), found in Pan troglodytes (Chimpanzee).